The following is a 373-amino-acid chain: DNA replication and repair protein RecF (373 aa).

30–37 serves as a coordination point for ATP; sequence GENAQGKT.

It belongs to the RecF family.

It is found in the cytoplasm. Its function is as follows. The RecF protein is involved in DNA metabolism; it is required for DNA replication and normal SOS inducibility. RecF binds preferentially to single-stranded, linear DNA. It also seems to bind ATP. The protein is DNA replication and repair protein RecF of Bacillus cytotoxicus (strain DSM 22905 / CIP 110041 / 391-98 / NVH 391-98).